Here is a 575-residue protein sequence, read N- to C-terminus: Arginine--tRNA ligase (575 aa).

Positions 122-132 (PNVAKEMHVGH) match the 'HIGH' region motif.

Belongs to the class-I aminoacyl-tRNA synthetase family. As to quaternary structure, monomer.

It is found in the cytoplasm. It carries out the reaction tRNA(Arg) + L-arginine + ATP = L-arginyl-tRNA(Arg) + AMP + diphosphate. The protein is Arginine--tRNA ligase of Actinobacillus succinogenes (strain ATCC 55618 / DSM 22257 / CCUG 43843 / 130Z).